The primary structure comprises 354 residues: Trans-L-3-hydroxyproline dehydratase (354 aa).

Catalysis depends on Cys104, which acts as the Proton acceptor. Substrate contacts are provided by residues 105-106, Asp269, and 274-275; these read GH and GS.

Belongs to the proline racemase family. As to quaternary structure, homodimer.

The catalysed reaction is trans-3-hydroxy-L-proline = 1-pyrroline-2-carboxylate + H2O. Its function is as follows. Catalyzes the dehydration of trans-3-hydroxy-L-proline to delta-1-pyrroline-2-carboxylate (Pyr2C). This Mus musculus (Mouse) protein is Trans-L-3-hydroxyproline dehydratase (L3hypdh).